Reading from the N-terminus, the 284-residue chain is Pantothenate synthetase (284 aa).

Residue 30-37 (MGNLHDGH) coordinates ATP. The active-site Proton donor is His-37. Gln-61 serves as a coordination point for (R)-pantoate. Position 61 (Gln-61) interacts with beta-alanine. 149 to 152 (GEKD) is an ATP binding site. Gln-155 lines the (R)-pantoate pocket. ATP-binding positions include Ile-178 and 186 to 189 (LSSR).

It belongs to the pantothenate synthetase family. As to quaternary structure, homodimer.

The protein resides in the cytoplasm. The catalysed reaction is (R)-pantoate + beta-alanine + ATP = (R)-pantothenate + AMP + diphosphate + H(+). The protein operates within cofactor biosynthesis; (R)-pantothenate biosynthesis; (R)-pantothenate from (R)-pantoate and beta-alanine: step 1/1. Catalyzes the condensation of pantoate with beta-alanine in an ATP-dependent reaction via a pantoyl-adenylate intermediate. The chain is Pantothenate synthetase from Salmonella typhi.